Here is a 420-residue protein sequence, read N- to C-terminus: Tyrosine--tRNA ligase (420 aa).

Y36 lines the L-tyrosine pocket. The 'HIGH' region motif lies at P41–H50. The L-tyrosine site is built by Y170 and Q174. The 'KMSKS' region motif lies at K231–S235. Residue K234 coordinates ATP. The 68-residue stretch at T353–K420 folds into the S4 RNA-binding domain.

It belongs to the class-I aminoacyl-tRNA synthetase family. TyrS type 1 subfamily. In terms of assembly, homodimer.

It localises to the cytoplasm. It catalyses the reaction tRNA(Tyr) + L-tyrosine + ATP = L-tyrosyl-tRNA(Tyr) + AMP + diphosphate + H(+). Catalyzes the attachment of tyrosine to tRNA(Tyr) in a two-step reaction: tyrosine is first activated by ATP to form Tyr-AMP and then transferred to the acceptor end of tRNA(Tyr). In Staphylococcus carnosus (strain TM300), this protein is Tyrosine--tRNA ligase.